A 320-amino-acid chain; its full sequence is Beta-sarcoglycan (320 aa).

Over residues 1 to 10 the composition is skewed to low complexity; sequence MAAAAAAAAA. The segment at 1-34 is disordered; it reads MAAAAAAAAATEQQSSNGPVKKSMREKAVERRNV. Topologically, residues 1-67 are cytoplasmic; that stretch reads MAAAAAAAAA…GLRGRKGNLA (67 aa). Residues 23-34 are compositionally biased toward basic and acidic residues; that stretch reads SMREKAVERRNV. Residues 68 to 88 form a helical; Signal-anchor for type II membrane protein membrane-spanning segment; sequence ICVIVLLFILAVINLLITLVI. The Extracellular segment spans residues 89-320; it reads WAVIRIGPNG…VADNPCGNTH (232 aa). 3 N-linked (GlcNAc...) asparagine glycosylation sites follow: asparagine 160, asparagine 213, and asparagine 260. 2 disulfides stabilise this stretch: cysteine 290–cysteine 316 and cysteine 292–cysteine 309.

It belongs to the sarcoglycan beta/delta/gamma/zeta family. Cross-link to form 2 major subcomplexes: one consisting of SGCB, SGCD and SGCG and the other consisting of SGCB and SGCD. The association between SGCB and SGCG is particularly strong while SGCA is loosely associated with the other sarcoglycans. In terms of processing, disulfide bonds are present.

It is found in the cell membrane. The protein resides in the sarcolemma. The protein localises to the cytoplasm. It localises to the cytoskeleton. Its function is as follows. Component of the sarcoglycan complex, a subcomplex of the dystrophin-glycoprotein complex which forms a link between the F-actin cytoskeleton and the extracellular matrix. This is Beta-sarcoglycan (SGCB) from Mesocricetus auratus (Golden hamster).